The chain runs to 84 residues: ATP synthase subunit c (84 aa).

The next 2 membrane-spanning stretches (helical) occupy residues 1–21 (MLAWVIIVSIITAGLSVALVG) and 53–73 (LLFALAFIETIMIFTLTVALI).

Belongs to the ATPase C chain family. F-type ATPases have 2 components, F(1) - the catalytic core - and F(0) - the membrane proton channel. F(1) has five subunits: alpha(3), beta(3), gamma(1), delta(1), epsilon(1). F(0) has three main subunits: a(1), b(2) and c(10-14). The alpha and beta chains form an alternating ring which encloses part of the gamma chain. F(1) is attached to F(0) by a central stalk formed by the gamma and epsilon chains, while a peripheral stalk is formed by the delta and b chains.

It localises to the cell inner membrane. Its function is as follows. F(1)F(0) ATP synthase produces ATP from ADP in the presence of a proton or sodium gradient. F-type ATPases consist of two structural domains, F(1) containing the extramembraneous catalytic core and F(0) containing the membrane proton channel, linked together by a central stalk and a peripheral stalk. During catalysis, ATP synthesis in the catalytic domain of F(1) is coupled via a rotary mechanism of the central stalk subunits to proton translocation. Key component of the F(0) channel; it plays a direct role in translocation across the membrane. A homomeric c-ring of between 10-14 subunits forms the central stalk rotor element with the F(1) delta and epsilon subunits. The sequence is that of ATP synthase subunit c from Dictyoglomus thermophilum (strain ATCC 35947 / DSM 3960 / H-6-12).